We begin with the raw amino-acid sequence, 497 residues long: Glycerol kinase (497 aa).

ADP is bound at residue threonine 13. The ATP site is built by threonine 13, threonine 14, and serine 15. Threonine 13 lines the sn-glycerol 3-phosphate pocket. Position 17 (arginine 17) interacts with ADP. Residues arginine 83, glutamate 84, and tyrosine 135 each coordinate sn-glycerol 3-phosphate. Positions 83, 84, and 135 each coordinate glycerol. Histidine 231 carries the phosphohistidine; by HPr modification. Sn-glycerol 3-phosphate is bound at residue aspartate 245. The glycerol site is built by aspartate 245 and glutamine 246. ADP contacts are provided by threonine 267 and glycine 310. Residues threonine 267, glycine 310, glutamine 314, and glycine 411 each contribute to the ATP site. Residues glycine 411 and asparagine 415 each coordinate ADP.

This sequence belongs to the FGGY kinase family. As to quaternary structure, homotetramer and homodimer (in equilibrium). Post-translationally, the phosphoenolpyruvate-dependent sugar phosphotransferase system (PTS), including enzyme I, and histidine-containing protein (HPr) are required for the phosphorylation, which leads to the activation of the enzyme.

The enzyme catalyses glycerol + ATP = sn-glycerol 3-phosphate + ADP + H(+). The protein operates within polyol metabolism; glycerol degradation via glycerol kinase pathway; sn-glycerol 3-phosphate from glycerol: step 1/1. Its activity is regulated as follows. Activated by phosphorylation and inhibited by fructose 1,6-bisphosphate (FBP). Key enzyme in the regulation of glycerol uptake and metabolism. Catalyzes the phosphorylation of glycerol to yield sn-glycerol 3-phosphate. This Listeria monocytogenes serotype 4b (strain F2365) protein is Glycerol kinase.